A 309-amino-acid polypeptide reads, in one-letter code: ATP synthase gamma chain (309 aa).

Belongs to the ATPase gamma chain family. As to quaternary structure, F-type ATPases have 2 components, CF(1) - the catalytic core - and CF(0) - the membrane proton channel. CF(1) has five subunits: alpha(3), beta(3), gamma(1), delta(1), epsilon(1). CF(0) has three main subunits: a, b and c.

It is found in the cell membrane. Functionally, produces ATP from ADP in the presence of a proton gradient across the membrane. The gamma chain is believed to be important in regulating ATPase activity and the flow of protons through the CF(0) complex. In Mycolicibacterium vanbaalenii (strain DSM 7251 / JCM 13017 / BCRC 16820 / KCTC 9966 / NRRL B-24157 / PYR-1) (Mycobacterium vanbaalenii), this protein is ATP synthase gamma chain.